A 303-amino-acid chain; its full sequence is MRGILLAGGTGSRLRPVTWAVSKQLMPVYDKPMIYYPLATLVSCGIREILVITTETEAAQFQRLLGDGSQWGLRLEFAVQQRPGGIAEAFLIGEEFLAGGPVALMLGDNLLHGVDFRPCVQRARETAGGHVFGVAVADPSAYGVVEFDAAGRVLSIEEKPVRPRSPYAVPGFYLYDADVVETARSLRPSARGELEITEVNQAYLRRGALSVTLLGRGAVWLDTGTLADCMRAVDYVRAIDEGQGIKIGCVEEAAWRAGFLDTAQLRALAEPLMSSGYGQYLLALTGDGLSRTPQWPALTAAAG.

The Mg(2+) site is built by D108 and D222.

This sequence belongs to the glucose-1-phosphate thymidylyltransferase family. The cofactor is Mg(2+).

The enzyme catalyses dTTP + alpha-D-glucose 1-phosphate + H(+) = dTDP-alpha-D-glucose + diphosphate. Functionally, catalyzes the formation of dTDP-glucose, from dTTP and glucose 1-phosphate, as well as its pyrophosphorolysis. Its function is as follows. Probably involved in the biosynthesis of the acarviose moiety of the alpha-glucosidase inhibitor acarbose. This is Glucose-1-phosphate thymidylyltransferase (acbA) from Actinoplanes sp. (strain ATCC 31044 / CBS 674.73 / SE50/110).